The primary structure comprises 67 residues: Large ribosomal subunit protein uL29 (67 aa).

Belongs to the universal ribosomal protein uL29 family.

The polypeptide is Large ribosomal subunit protein uL29 (Exiguobacterium sp. (strain ATCC BAA-1283 / AT1b)).